Consider the following 174-residue polypeptide: tRNA (cytidine(56)-2'-O)-methyltransferase (174 aa).

S-adenosyl-L-methionine-binding positions include Leu-80, 105–109 (GAEKV), and 123–130 (ISNQPHSE).

This sequence belongs to the aTrm56 family. As to quaternary structure, homodimer.

It localises to the cytoplasm. It carries out the reaction cytidine(56) in tRNA + S-adenosyl-L-methionine = 2'-O-methylcytidine(56) in tRNA + S-adenosyl-L-homocysteine + H(+). Its function is as follows. Specifically catalyzes the AdoMet-dependent 2'-O-ribose methylation of cytidine at position 56 in tRNAs. This is tRNA (cytidine(56)-2'-O)-methyltransferase from Metallosphaera sedula (strain ATCC 51363 / DSM 5348 / JCM 9185 / NBRC 15509 / TH2).